The sequence spans 296 residues: Enoyl-CoA hydratase domain-containing protein 2, mitochondrial (296 aa).

At lysine 101 the chain carries N6-acetyllysine; alternate. The residue at position 101 (lysine 101) is an N6-succinyllysine; alternate.

It belongs to the enoyl-CoA hydratase/isomerase family.

Its subcellular location is the mitochondrion. The chain is Enoyl-CoA hydratase domain-containing protein 2, mitochondrial (ECHDC2) from Bos taurus (Bovine).